We begin with the raw amino-acid sequence, 287 residues long: MSAIDDLPPLREVIRRHDLAARKSLGQNFLLDLNLTARIARAAGPLEGVTVVEIGPGPGGLTRALLATGAKRVIAIERDERALGALEEIAAHYPGRLDIISGDAMEFDPRPLLNGDRARIVANLPYNIATPLLIGWLCAEPWPPWYEMMVLMFQREVAQRIVAHHDDDAYGRLAVLANWRAETQMLFDISPSAFVPPPKVTSSVVRLVPRAQPEPCDRAALEQVAAAAFGQRRKMLRQSLKSLGVDPAQLTAAAGIDPARRAETVPVSGFVAMANELANSRAIRTQA.

Asn28, Leu30, Gly55, Glu77, Asp103, and Asn123 together coordinate S-adenosyl-L-methionine.

Belongs to the class I-like SAM-binding methyltransferase superfamily. rRNA adenine N(6)-methyltransferase family. RsmA subfamily.

It is found in the cytoplasm. It carries out the reaction adenosine(1518)/adenosine(1519) in 16S rRNA + 4 S-adenosyl-L-methionine = N(6)-dimethyladenosine(1518)/N(6)-dimethyladenosine(1519) in 16S rRNA + 4 S-adenosyl-L-homocysteine + 4 H(+). Its function is as follows. Specifically dimethylates two adjacent adenosines (A1518 and A1519) in the loop of a conserved hairpin near the 3'-end of 16S rRNA in the 30S particle. May play a critical role in biogenesis of 30S subunits. The protein is Ribosomal RNA small subunit methyltransferase A of Rhodopseudomonas palustris (strain TIE-1).